The primary structure comprises 184 residues: ATP synthase subunit b, chloroplastic (184 aa).

The helical transmembrane segment at 27-49 (LATNPINLSVVLGVLIFFGKGVL) threads the bilayer.

The protein belongs to the ATPase B chain family. In terms of assembly, F-type ATPases have 2 components, F(1) - the catalytic core - and F(0) - the membrane proton channel. F(1) has five subunits: alpha(3), beta(3), gamma(1), delta(1), epsilon(1). F(0) has four main subunits: a(1), b(1), b'(1) and c(10-14). The alpha and beta chains form an alternating ring which encloses part of the gamma chain. F(1) is attached to F(0) by a central stalk formed by the gamma and epsilon chains, while a peripheral stalk is formed by the delta, b and b' chains.

It localises to the plastid. It is found in the chloroplast thylakoid membrane. Its function is as follows. F(1)F(0) ATP synthase produces ATP from ADP in the presence of a proton or sodium gradient. F-type ATPases consist of two structural domains, F(1) containing the extramembraneous catalytic core and F(0) containing the membrane proton channel, linked together by a central stalk and a peripheral stalk. During catalysis, ATP synthesis in the catalytic domain of F(1) is coupled via a rotary mechanism of the central stalk subunits to proton translocation. In terms of biological role, component of the F(0) channel, it forms part of the peripheral stalk, linking F(1) to F(0). This chain is ATP synthase subunit b, chloroplastic, found in Buxus microphylla (Littleleaf boxwood).